The primary structure comprises 638 residues: Chaperone protein HtpG (638 aa).

An a; substrate-binding region spans residues 1-343 (MTSTIDSDGA…SADLPLNISR (343 aa)). The interval 344 to 557 (EMIQESPILA…ESGPDRQLEK (214 aa)) is b. The c stretch occupies residues 558–638 (ILVGVGQLTG…VERGLRGSTA (81 aa)).

This sequence belongs to the heat shock protein 90 family. Homodimer.

It is found in the cytoplasm. Molecular chaperone. Has ATPase activity. The chain is Chaperone protein HtpG from Nitrobacter hamburgensis (strain DSM 10229 / NCIMB 13809 / X14).